Consider the following 370-residue polypeptide: Erythronate-4-phosphate dehydrogenase (370 aa).

Residues Ser45 and Thr66 each contribute to the substrate site. 2 residues coordinate NAD(+): Asp142 and Thr169. Arg202 is an active-site residue. Asp228 serves as a coordination point for NAD(+). Glu233 is an active-site residue. Residue His250 is the Proton donor of the active site. Gly253 is an NAD(+) binding site. Tyr254 contributes to the substrate binding site.

Belongs to the D-isomer specific 2-hydroxyacid dehydrogenase family. PdxB subfamily. As to quaternary structure, homodimer.

It localises to the cytoplasm. The catalysed reaction is 4-phospho-D-erythronate + NAD(+) = (R)-3-hydroxy-2-oxo-4-phosphooxybutanoate + NADH + H(+). It participates in cofactor biosynthesis; pyridoxine 5'-phosphate biosynthesis; pyridoxine 5'-phosphate from D-erythrose 4-phosphate: step 2/5. In terms of biological role, catalyzes the oxidation of erythronate-4-phosphate to 3-hydroxy-2-oxo-4-phosphonooxybutanoate. This is Erythronate-4-phosphate dehydrogenase from Teredinibacter turnerae (strain ATCC 39867 / T7901).